The primary structure comprises 333 residues: Complement C1q and tumor necrosis factor-related protein 9 (333 aa).

A signal peptide spans 1–19; sequence MRIWWLLLVMGACTRSVFS. Residues 22–194 are disordered; it reads TCRQGHSGIP…GDRGEKGKVG (173 aa). 3 Collagen-like domains span residues 24–82, 84–130, and 134–193; these read RQGH…DGRV, AKGI…KGEV, and GPEG…KGKV. Residues P31, P34, and P40 each carry the 4-hydroxyproline modification. A compositionally biased stretch (basic and acidic residues) spans 42–57; that stretch reads RDGRDGAKGDKGDAGE. A 4-hydroxyproline mark is found at P58, P61, and P64. Residues 67 to 88 are compositionally biased toward basic and acidic residues; the sequence is DGIRGEKGEPGADGRVEAKGIK. The residue at position 73 (K73) is a 5-hydroxylysine. O-linked (Gal...) hydroxylysine glycosylation is present at K73. P76 and P115 each carry 4-hydroxyproline. K127 carries the 5-hydroxylysine modification. An O-linked (Gal...) hydroxylysine glycan is attached at K127. A 4-hydroxyproline mark is found at P151, P160, and P175. A compositionally biased stretch (basic and acidic residues) spans 183–193; sequence WKGDRGEKGKV. A C1q domain is found at 197-333; sequence PLVPKSAFTV…FTGFLLFSSS (137 aa).

Multimers (predominantly trimers). Interacts with ADIPOQ via the C1q domain to form a heterotrimeric complex. Post-translationally, the isomeric forms of the hydroxylated amino acids could not be determined in the mass-spectrometric methods reported in PubMed:18787108 but are assumed on the basis of their occurrence in collagen-like domains. In terms of tissue distribution, expressed predominantly in adipose tissue. Females express higher levels than males.

It is found in the secreted. In terms of biological role, probable adipokine. Activates AMPK, AKT, and p44/42 MAPK signaling pathways. The polypeptide is Complement C1q and tumor necrosis factor-related protein 9 (C1qtnf9) (Mus musculus (Mouse)).